Reading from the N-terminus, the 342-residue chain is Succinylglutamate desuccinylase (342 aa).

Positions 63, 66, and 155 each coordinate Zn(2+). Residue Glu-219 is part of the active site.

This sequence belongs to the AspA/AstE family. Succinylglutamate desuccinylase subfamily. Requires Zn(2+) as cofactor.

It catalyses the reaction N-succinyl-L-glutamate + H2O = L-glutamate + succinate. The protein operates within amino-acid degradation; L-arginine degradation via AST pathway; L-glutamate and succinate from L-arginine: step 5/5. In terms of biological role, transforms N(2)-succinylglutamate into succinate and glutamate. This is Succinylglutamate desuccinylase from Vibrio cholerae serotype O1 (strain ATCC 39315 / El Tor Inaba N16961).